Here is a 181-residue protein sequence, read N- to C-terminus: Acireductone dioxygenase (181 aa).

His-98, His-100, Glu-104, and His-142 together coordinate Fe(2+). Residues His-98, His-100, Glu-104, and His-142 each coordinate Ni(2+).

The protein belongs to the acireductone dioxygenase (ARD) family. As to quaternary structure, monomer. It depends on Fe(2+) as a cofactor. Requires Ni(2+) as cofactor.

The enzyme catalyses 1,2-dihydroxy-5-(methylsulfanyl)pent-1-en-3-one + O2 = 3-(methylsulfanyl)propanoate + CO + formate + 2 H(+). It catalyses the reaction 1,2-dihydroxy-5-(methylsulfanyl)pent-1-en-3-one + O2 = 4-methylsulfanyl-2-oxobutanoate + formate + 2 H(+). Its pathway is amino-acid biosynthesis; L-methionine biosynthesis via salvage pathway; L-methionine from S-methyl-5-thio-alpha-D-ribose 1-phosphate: step 5/6. Catalyzes 2 different reactions between oxygen and the acireductone 1,2-dihydroxy-3-keto-5-methylthiopentene (DHK-MTPene) depending upon the metal bound in the active site. Fe-containing acireductone dioxygenase (Fe-ARD) produces formate and 2-keto-4-methylthiobutyrate (KMTB), the alpha-ketoacid precursor of methionine in the methionine recycle pathway. Ni-containing acireductone dioxygenase (Ni-ARD) produces methylthiopropionate, carbon monoxide and formate, and does not lie on the methionine recycle pathway. This chain is Acireductone dioxygenase, found in Synechococcus sp. (strain ATCC 27144 / PCC 6301 / SAUG 1402/1) (Anacystis nidulans).